A 107-amino-acid chain; its full sequence is High mobility group protein HMG-I/HMG-Y (107 aa).

Residues 1–13 show a composition bias toward polar residues; the sequence is MSESVSKSSQPLA. The segment at 1 to 107 is disordered; sequence MSESVSKSSQ…ISQESSEEEQ (107 aa). An N-acetylserine modification is found at S2. K7 carries the post-translational modification N6-acetyllysine. The residue at position 8 (S8) is an ADP-ribosylserine. An ADP-ribosylserine; alternate modification is found at S9. S9 carries the phosphoserine; alternate modification. K15 bears the N6-acetyllysine; alternate mark. A Glycyl lysine isopeptide (Lys-Gly) (interchain with G-Cter in SUMO2); alternate cross-link involves residue K15. Residues 15–24 are compositionally biased toward basic and acidic residues; that stretch reads KQEKDGTEKR. Positions 21-31 form a DNA-binding region, a.T hook 1; the sequence is TEKRGRGRPRK. An Asymmetric dimethylarginine; alternate modification is found at R26. R26 is modified (omega-N-methylarginine; alternate). Residue R26 is modified to Symmetric dimethylarginine; alternate. Residue S36 is modified to Phosphoserine; by HIPK2 and CDC2. T39 carries the phosphothreonine modification. Phosphoserine is present on residues S44 and S49. T53 carries the post-translational modification Phosphothreonine; by HIPK2 and CDC2. DNA-binding regions (a.T hook) lie at residues 53-63 and 78-89; these read TPKRPRGRPKG and TPGRKPRGRPKK. The interval 53-77 is interaction with HIPK2; sequence TPKRPRGRPKGSKNKGTAKTRKVTT. Residues 55–74 are compositionally biased toward basic residues; that stretch reads KRPRGRPKGSKNKGTAKTRK. Residues R58 and R60 each carry the asymmetric dimethylarginine; by PRMT6; alternate modification. An omega-N-methylarginine; by PRMT6; alternate mark is found at R58 and R60. Residue T78 is modified to Phosphothreonine; by HIPK2 and CDC2. Residues 93 to 107 show a composition bias toward acidic residues; sequence EEEEGISQESSEEEQ. Phosphoserine occurs at positions 99, 102, and 103.

This sequence belongs to the HMGA family. As to quaternary structure, interacts with HIPK2. In terms of processing, isoforms HMG-I and HMG-Y can be phosphorylated by HIPK2. Phosphorylation may modulate DNA-binding affinity. Methylation at Arg-58 is mutually exclusive with methylation at Arg-60.

The protein resides in the nucleus. The protein localises to the chromosome. Its function is as follows. HMG-I/Y bind preferentially to the minor groove of A+T rich regions in double-stranded DNA. It is suggested that these proteins could function in nucleosome phasing and in the 3'-end processing of mRNA transcripts. They are also involved in the transcription regulation of genes containing, or in close proximity to A+T-rich regions. The chain is High mobility group protein HMG-I/HMG-Y (Hmga1) from Rattus norvegicus (Rat).